Here is a 198-residue protein sequence, read N- to C-terminus: Thioredoxin reductase-like selenoprotein T homolog CG3887 (198 aa).

Residues 1–25 (MERLTGRNVALLVLCLCAGYALVFA) form the signal peptide. Cys-49 and Cys-52 are disulfide-bonded.

The protein belongs to the SelWTH family. SELT subfamily.

The catalysed reaction is [thioredoxin]-dithiol + NADP(+) = [thioredoxin]-disulfide + NADPH + H(+). Probably has thioredoxin reductase-like oxidoreductase activity. This Drosophila melanogaster (Fruit fly) protein is Thioredoxin reductase-like selenoprotein T homolog CG3887.